Consider the following 77-residue polypeptide: Probable Fe(2+)-trafficking protein (77 aa).

It belongs to the Fe(2+)-trafficking protein family. In terms of assembly, monomer.

Functionally, could be a mediator in iron transactions between iron acquisition and iron-requiring processes, such as synthesis and/or repair of Fe-S clusters in biosynthetic enzymes. This Buchnera aphidicola subsp. Acyrthosiphon pisum (strain APS) (Acyrthosiphon pisum symbiotic bacterium) protein is Probable Fe(2+)-trafficking protein.